Consider the following 776-residue polypeptide: Protein SEY1 (776 aa).

At 1 to 681 (MADRSAIQLI…KRSIITTRTH (681 aa)) the chain is on the cytoplasmic side. The GB1/RHD3-type G domain occupies 34 to 263 (GLDYHVISVF…TENYYFKPQY (230 aa)). 44–51 (GSQSSGKS) is a GTP binding site. A helical membrane pass occupies residues 682 to 702 (IPPWIYVLLAVLGWNEFVAVI). Residues 703 to 705 (RNP) are Lumenal-facing. The helical transmembrane segment at 706–726 (LFVTLTLILGATFFVIHKFGL) threads the bilayer. Topologically, residues 727-776 (WGPVVNVVQSAVGETRTAIKDKLRQFVVEDHEVKESFEMKDFSKNEQKEK) are cytoplasmic.

This sequence belongs to the TRAFAC class dynamin-like GTPase superfamily. GB1/RHD3 GTPase family. RHD3 subfamily. In terms of assembly, interacts with RTN1 and YOP1; GTP binding is not required for these interactions.

Its subcellular location is the endoplasmic reticulum membrane. Functionally, cooperates with the reticulon proteins RTN1 and RTN2 and the tubule-shaping DP1 family protein YOP1 to generate and maintain the structure of the tubular endoplasmic reticulum network. Has GTPase activity, which is required for its function in ER organization. This chain is Protein SEY1, found in Saccharomyces cerevisiae (strain AWRI1631) (Baker's yeast).